The chain runs to 292 residues: Nanos homolog 1 (292 aa).

Disordered stretches follow at residues 1–41 (MEAF…QPFS) and 68–121 (GGNG…SRGR). Residues 40–56 (FSSWNDYLGLATLITKA) form an essential for its translational repressor activity region. The span at 76–87 (PPSSSSSSCCSP) shows a compositional bias: low complexity. Residues 104 to 115 (DYDEDDDDDSDE) show a composition bias toward acidic residues. The Nanos-type zinc finger occupies 213–267 (VCVFCRNNKEAMALYTTHILKGPDGRVLCPVLRRYTCPLCGASGDNAHTIKYCPL). Zn(2+) contacts are provided by Cys-214, Cys-217, His-230, Cys-241, Cys-249, Cys-252, His-260, and Cys-265. 2 consecutive short sequence motifs (C2HC) follow at residues 214–241 (CVFC…RVLC) and 249–265 (CPLC…IKYC). A disordered region spans residues 268–292 (SKVPPPPARPPPRSARDGPPGKKLR). Positions 269 to 280 (KVPPPPARPPPR) are enriched in pro residues. The span at 281 to 292 (SARDGPPGKKLR) shows a compositional bias: basic and acidic residues.

Belongs to the nanos family. As to quaternary structure, interacts with PUM2, SNAPIN and CTNNB1. Interacts (via N-terminal region) with CTNND1. Interacts with DDX20 (via N-terminal region). As to expression, testis and ovary (at protein level). Predominantly expressed in testis. Specifically expressed during germline development. In adult tissues, it is mainly expressed in spermatogonia, the stem cells of the germline. Also expressed during meiosis in spermatocytes. Not present in late, post-meiotic stage germ cells. Expressed in fetal ovaries, while it is weakly or not expressed in mature postmeiotic oocytes, suggesting that it may be expressed in premeiotic female germ cells. Expressed at high levels only in the E-cadherin deficient cell lines. Highly expressed in lung carcinomas and mostly detected in invasive tumor cells and its expression correlates with tumor aggressiveness.

Its subcellular location is the cytoplasm. The protein resides in the perinuclear region. May act as a translational repressor which regulates translation of specific mRNAs by forming a complex with PUM2 that associates with the 3'-UTR of mRNA targets. Capable of interfering with the proadhesive and anti-invasive functions of E-cadherin. Up-regulates the production of MMP14 to promote tumor cell invasion. This is Nanos homolog 1 (NANOS1) from Homo sapiens (Human).